Here is a 973-residue protein sequence, read N- to C-terminus: MAQLYYKKVNYSPYRDRIPLQIVRAETELSAEEKAFLNAVEKGDYATVKQALQEAEIYYNVNINCMDPLGRSALLIAIENENLEIMELLLNHSVYVGDALLYAIRKEVVGAVELLLSYRRPSGEKQVPTLMMDTQFSEFTPDITPIMLAAHTNNYEIIKLLVQKRVTIPRPHQIRCNCVECVSSSEVDSLRHSRSRLNIYKALASPSLIALSSEDPILTAFRLGWELKELSKVENEFKAEYEELSQQCKLFAKDLLDQARSSRELEIILNHRDDHSEELDPQKYHDLAKLKVAIKYHQKEFVAQPNCQQLLATLWYDGFPGWRRKHWVVKLLTCMTIGFLFPMLSIAYLISPRSNLGLFIKKPFIKFICHTASYLTFLFMLLLASQHIVRTDLHVQGPPPTVVEWMILPWVLGFIWGEIKEMWDGGFTEYIHDWWNLMDFAMNSLYLATISLKIVAYVKYNGSRPREEWEMWHPTLIAEALFAISNILSSLRLISLFTANSHLGPLQISLGRMLLDILKFLFIYCLVLLAFANGLNQLYFYYETRAIDEPNNCKGIRCEKQNNAFSTLFETLQSLFWSVFGLLNLYVTNVKARHEFTEFVGATMFGTYNVISLVVLLNMLIAMMNNSYQLIADHADIEWKFARTKLWMSYFDEGGTLPPPFNIIPSPKSFLYLGNWFNNTFCPKRDPDGRRRRRNLRSFTERNADSLIQNQHYQEVIRNLVKRYVAAMIRNSKTHEGLTEENFKELKQDISSFRYEVLDLLGNRKHPRSFSTSSTELSQRDDNNDGSGGARAKSKSVSFNLGCKKKTCHGPPLIRTMPRSSGAQGKSKAESSSKRSFMGPSLKKLGLLFSKFNGHMSEPSSEPMYTISDGIVQQHCMWQDIRYSQMEKGKAEACSQSEINLSEVELGEVQGAAQSSECPLACSSSLHCASSICSSNSKLLDSSEDVFETWGEACDLLMHKWGDGQEEQVTTRL.

The Cytoplasmic segment spans residues 1–325 (MAQLYYKKVN…YDGFPGWRRK (325 aa)). ANK repeat units lie at residues 30 to 60 (SAEE…IYYN), 69 to 97 (LGRS…VYVG), 98 to 124 (DALL…PSGE), and 141 to 170 (PDIT…TIPR). Residues H172, C176, C178, and C181 each contribute to the Zn(2+) site. The segment at residues 326-360 (HWVVKLLTCMTIGFLFPMLSIAYLISPRSNLGLFI) is an intramembrane region (discontinuously helical). At 361-363 (KKP) the chain is on the cytoplasmic side. The chain crosses the membrane as a helical span at residues 364-384 (FIKFICHTASYLTFLFMLLLA). The Extracellular portion of the chain corresponds to 385–404 (SQHIVRTDLHVQGPPPTVVE). A helical membrane pass occupies residues 405–419 (WMILPWVLGFIWGEI). Ca(2+) is bound by residues E418, E421, N436, and D439. Topologically, residues 420-433 (KEMWDGGFTEYIHD) are cytoplasmic. The helical transmembrane segment at 434–454 (WWNLMDFAMNSLYLATISLKI) threads the bilayer. Topologically, residues 455 to 476 (VAYVKYNGSRPREEWEMWHPTL) are extracellular. The N-linked (GlcNAc...) asparagine glycan is linked to N461. The chain crosses the membrane as a helical span at residues 477-497 (IAEALFAISNILSSLRLISLF). At 498–512 (TANSHLGPLQISLGR) the chain is on the cytoplasmic side. The helical transmembrane segment at 513–535 (MLLDILKFLFIYCLVLLAFANGL) threads the bilayer. Residues 536–603 (NQLYFYYETR…HEFTEFVGAT (68 aa)) lie on the Extracellular side of the membrane. Residues C553 and C558 are joined by a disulfide bond. A helical transmembrane segment spans residues 604 to 624 (MFGTYNVISLVVLLNMLIAMM). The Cytoplasmic portion of the chain corresponds to 625–973 (NNSYQLIADH…GQEEQVTTRL (349 aa)). Disordered stretches follow at residues 766-794 (HPRS…RAKS) and 810-837 (GPPL…KRSF). An essential for binding to NHERF1 PDZ domain region spans residues 971–973 (TRL).

This sequence belongs to the transient receptor (TC 1.A.4) family. STrpC subfamily. TRPC5 sub-subfamily. In terms of assembly, homotetramer. Heterotetramer with TRPC1 and/or TRPC4. Each subunit in the homomeric ion channel (via ANK repeats) interacts with one copy of GTP-bound GNAI3; the interaction is direct and activates the ion channel. Interacts with TRPC4AP. Interacts with NHERF1. Interacts with MX1 and RNF24. Interacts (via C-terminus) with CABP1. Interacts with SESTD1 (via the spectrin 1 repeat). Interacts with PLSCR1. Interacts with PKD2L2. In terms of tissue distribution, expressed in brain with higher levels in fetal brain. Found in cerebellum and occipital pole.

The protein localises to the cell membrane. It catalyses the reaction Ca(2+)(in) = Ca(2+)(out). Its activity is regulated as follows. Activated by G-protein coupled receptors via direct interaction with GTP-bound GNAI3, which increases the channel sensitivity to phosphatidylinositol bisphosphate. May be activated by intracellular calcium store depletion. Calcium channel activity is enhanced by MYLK, that promotes its subcellular localization at the plasma membrane. In terms of biological role, forms a receptor-activated non-selective calcium permeant cation channel. Mediates calcium-dependent phosphatidylserine externalization and apoptosis in neurons via its association with PLSCR1. Acts on distinct neuronal populations in the hypothalamus to regulate innate behaviors including feeding, anxiety (flight/fight/fear), socialization, and maternal care. This is Short transient receptor potential channel 5 (TRPC5) from Homo sapiens (Human).